The primary structure comprises 195 residues: Probable GTP-binding protein EngB (195 aa).

The 174-residue stretch at 22–195 folds into the EngB-type G domain; the sequence is QLPEIALAGR…WSALSRYIKR (174 aa). Residues 30 to 37, 57 to 61, 75 to 78, 142 to 145, and 174 to 176 each bind GTP; these read GRSNVGKS, GKTQT, DVPG, TKLD, and FSA. 2 residues coordinate Mg(2+): Ser-37 and Thr-59.

The protein belongs to the TRAFAC class TrmE-Era-EngA-EngB-Septin-like GTPase superfamily. EngB GTPase family. Mg(2+) is required as a cofactor.

Necessary for normal cell division and for the maintenance of normal septation. The sequence is that of Probable GTP-binding protein EngB from Oceanobacillus iheyensis (strain DSM 14371 / CIP 107618 / JCM 11309 / KCTC 3954 / HTE831).